The chain runs to 107 residues: Nucleoid-associated protein Msil_0275 (107 aa).

This sequence belongs to the YbaB/EbfC family. In terms of assembly, homodimer.

Its subcellular location is the cytoplasm. The protein resides in the nucleoid. In terms of biological role, binds to DNA and alters its conformation. May be involved in regulation of gene expression, nucleoid organization and DNA protection. The sequence is that of Nucleoid-associated protein Msil_0275 from Methylocella silvestris (strain DSM 15510 / CIP 108128 / LMG 27833 / NCIMB 13906 / BL2).